The sequence spans 128 residues: Small ribosomal subunit protein uS11 (128 aa).

This sequence belongs to the universal ribosomal protein uS11 family. In terms of assembly, part of the 30S ribosomal subunit. Interacts with proteins S7 and S18. Binds to IF-3.

Located on the platform of the 30S subunit, it bridges several disparate RNA helices of the 16S rRNA. Forms part of the Shine-Dalgarno cleft in the 70S ribosome. The chain is Small ribosomal subunit protein uS11 from Wolbachia pipientis wMel.